Here is a 344-residue protein sequence, read N- to C-terminus: Nicotinate-nucleotide--dimethylbenzimidazole phosphoribosyltransferase (344 aa).

E305 (proton acceptor) is an active-site residue.

The protein belongs to the CobT family.

The catalysed reaction is 5,6-dimethylbenzimidazole + nicotinate beta-D-ribonucleotide = alpha-ribazole 5'-phosphate + nicotinate + H(+). It participates in nucleoside biosynthesis; alpha-ribazole biosynthesis; alpha-ribazole from 5,6-dimethylbenzimidazole: step 1/2. Functionally, catalyzes the synthesis of alpha-ribazole-5'-phosphate from nicotinate mononucleotide (NAMN) and 5,6-dimethylbenzimidazole (DMB). The chain is Nicotinate-nucleotide--dimethylbenzimidazole phosphoribosyltransferase from Agrobacterium fabrum (strain C58 / ATCC 33970) (Agrobacterium tumefaciens (strain C58)).